Reading from the N-terminus, the 92-residue chain is Small ribosomal subunit protein uS19 (92 aa).

This sequence belongs to the universal ribosomal protein uS19 family.

Functionally, protein S19 forms a complex with S13 that binds strongly to the 16S ribosomal RNA. The polypeptide is Small ribosomal subunit protein uS19 (Geobacillus kaustophilus (strain HTA426)).